The following is a 292-amino-acid chain: uncharacterized protein (292 aa).

This is an uncharacterized protein from Acanthamoeba polyphaga (Amoeba).